The primary structure comprises 237 residues: Undecaprenyl-diphosphatase (237 aa).

A run of 7 helical transmembrane segments spans residues 38 to 58 (QTAV…FDGI), 65 to 85 (WRII…GVLF), 92 to 112 (LFSS…ILMF), 126 to 146 (MSFL…FPGI), 166 to 186 (ALQY…ILGL), 191 to 211 (VTIL…YVLS), and 217 to 237 (GKIW…YLVG).

It belongs to the UppP family.

The protein localises to the cell inner membrane. It catalyses the reaction di-trans,octa-cis-undecaprenyl diphosphate + H2O = di-trans,octa-cis-undecaprenyl phosphate + phosphate + H(+). Its function is as follows. Catalyzes the dephosphorylation of undecaprenyl diphosphate (UPP). Confers resistance to bacitracin. The polypeptide is Undecaprenyl-diphosphatase (Thermotoga sp. (strain RQ2)).